The primary structure comprises 164 residues: Probable calcium-binding protein CML17 (164 aa).

EF-hand domains lie at 4 to 39 (DQQAELRRVFELFDRDGDGRITREELTESLERLGMP), 40 to 75 (VHREELAATIARIDANGDGCVDMDEFTQLYETVMRV), 88 to 123 (VDEASMREAFDVFDRNGDGFITVDELGAVLASLGIK), and 126 to 161 (RTAEDCGRMIGQVDRDGDGRVDFLEFKQMMRGGAFA). Ca(2+) contacts are provided by D17, D19, D21, R23, E28, D53, N55, D57, C59, E64, D101, N103, D105, E112, D139, D141, D143, R145, and E150.

Functionally, potential calcium sensor. This Oryza sativa subsp. japonica (Rice) protein is Probable calcium-binding protein CML17 (CML17).